Here is a 541-residue protein sequence, read N- to C-terminus: 2-hydroxyacylsphingosine 1-beta-galactosyltransferase (541 aa).

Residues 1–20 (MKSYTPYFMLLWSAVGIARA) form the signal peptide. N-linked (GlcNAc...) asparagine glycosylation is found at asparagine 78, asparagine 333, and asparagine 442. Residues 472-492 (YFLLDIAFVLLLGAVALYFIV) form a helical membrane-spanning segment.

It belongs to the UDP-glycosyltransferase family. Brain, restricted to the oligodendrocyte-containing cell layers of cerebrum and cerebellum.

The protein localises to the membrane. The protein resides in the endoplasmic reticulum. It catalyses the reaction an N-acylsphing-4-enine + UDP-alpha-D-galactose = a beta-D-galactosyl-(1&lt;-&gt;1')-N-acylsphing-4-enine + UDP + H(+). It carries out the reaction N-(2-hydroxy-hexanoyl)-sphing-4-enine + UDP-alpha-D-galactose = N-(2-hydroxy-hexanoyl)-beta-D-galactosyl-sphing-4-enine + UDP + H(+). The enzyme catalyses N-(2-hydroxy-hexanoyl)-sphinganine + UDP-alpha-D-galactose = N-(2-hydroxyhexanoyl)-beta-D-galactosylsphinganine + UDP + H(+). The catalysed reaction is an N-acyl-sphingoid base + UDP-alpha-D-galactose = a D-galactosylceramide + UDP + H(+). Its pathway is sphingolipid metabolism; galactosylceramide biosynthesis. Catalyzes the transfer of galactose to ceramide, a key enzymatic step in the biosynthesis of galactocerebrosides, which are abundant sphingolipids of the myelin membrane of the central nervous system and peripheral nervous system. Galactosylates both hydroxy- and non-hydroxy fatty acid-containing ceramides and diglycerides. This chain is 2-hydroxyacylsphingosine 1-beta-galactosyltransferase, found in Rattus norvegicus (Rat).